Here is a 226-residue protein sequence, read N- to C-terminus: Eukaryotic translation initiation factor 3 subunit K (226 aa).

One can recognise a PCI domain in the interval 44 to 202 (YSLEVNLCLL…IVLPQNEFNH (159 aa)).

It belongs to the eIF-3 subunit K family. Component of the eukaryotic translation initiation factor 3 (eIF-3) complex.

The protein localises to the cytoplasm. Functionally, component of the eukaryotic translation initiation factor 3 (eIF-3) complex, which is involved in protein synthesis of a specialized repertoire of mRNAs and, together with other initiation factors, stimulates binding of mRNA and methionyl-tRNAi to the 40S ribosome. The eIF-3 complex specifically targets and initiates translation of a subset of mRNAs involved in cell proliferation. In Arabidopsis thaliana (Mouse-ear cress), this protein is Eukaryotic translation initiation factor 3 subunit K (TIF3K1).